We begin with the raw amino-acid sequence, 776 residues long: DNA ligase (776 aa).

NAD(+) contacts are provided by residues 31 to 35 (DAEYD), 80 to 81 (SL), and Glu112. Lys114 acts as the N6-AMP-lysine intermediate in catalysis. NAD(+) contacts are provided by Arg135, Glu172, Lys288, and Lys312. Zn(2+) contacts are provided by Cys406, Cys409, Cys436, and Cys442. In terms of domain architecture, BRCT spans 693 to 776 (AEGLPLAGQT…TFLAEQGIAV (84 aa)).

Belongs to the NAD-dependent DNA ligase family. LigA subfamily. Mg(2+) is required as a cofactor. Mn(2+) serves as cofactor.

It carries out the reaction NAD(+) + (deoxyribonucleotide)n-3'-hydroxyl + 5'-phospho-(deoxyribonucleotide)m = (deoxyribonucleotide)n+m + AMP + beta-nicotinamide D-nucleotide.. DNA ligase that catalyzes the formation of phosphodiester linkages between 5'-phosphoryl and 3'-hydroxyl groups in double-stranded DNA using NAD as a coenzyme and as the energy source for the reaction. It is essential for DNA replication and repair of damaged DNA. The protein is DNA ligase of Pseudomonas putida (strain ATCC 47054 / DSM 6125 / CFBP 8728 / NCIMB 11950 / KT2440).